The primary structure comprises 854 residues: Fibroblast growth factor receptor 1 (854 aa).

The N-terminal stretch at 1–20 (MSGLFFLLSELLILLGKINS) is a signal peptide. The Extracellular segment spans residues 21–383 (VSKKSLCHPE…NFFMNSVPLS (363 aa)). The Ig-like C2-type 1 domain maps to 29-120 (PELFKIDNKL…SSVFFLINVT (92 aa)). Cys-50 and Cys-102 form a disulfide bridge. Asn-95, Asn-99, Asn-110, Asn-118, Asn-140, Asn-175, Asn-202, Asn-248, Asn-283, Asn-317, and Asn-346 each carry an N-linked (GlcNAc...) asparagine glycan. 2 consecutive Ig-like C2-type domains span residues 147–259 (PEMG…FTFT) and 268–369 (PHLT…LSVI). Cysteines 166 and 242 form a disulfide. The cysteines at positions 288 and 353 are disulfide-linked. The chain crosses the membrane as a helical span at residues 384–404 (IFLVIGFFVAIILLSLIIYCF). Topologically, residues 405–854 (FLQYKNAVDS…SDYLEPKCLV (450 aa)) are cytoplasmic. The 272-residue stretch at 551-822 (KITNKKLGEG…EIVEILIDII (272 aa)) folds into the Protein kinase domain. ATP is bound by residues 557-565 (LGEGAFGMV) and Lys-585. The active-site Proton acceptor is Asp-689. Residue Tyr-718 is modified to Phosphotyrosine; by autocatalysis.

Belongs to the protein kinase superfamily. Tyr protein kinase family. Fibroblast growth factor receptor subfamily. Expressed in brain, stem cells and the mesenchymal cells.

It localises to the membrane. The enzyme catalyses L-tyrosyl-[protein] + ATP = O-phospho-L-tyrosyl-[protein] + ADP + H(+). Its function is as follows. Receptor for basic fibroblast growth factor. This chain is Fibroblast growth factor receptor 1 (FGFR1), found in Dugesia japonica (Planarian).